A 411-amino-acid polypeptide reads, in one-letter code: Zinc metalloproteinase/disintegrin (411 aa).

The N-terminal stretch at 1 to 20 (MIEVLLVTICLAVFPYQGSS) is a signal peptide. The propeptide occupies 21-190 (IILESGNVND…KASQLYLTPE (170 aa)). One can recognise a Peptidase M12B domain in the interval 197 to 395 (RYVKLAIVVD…SKPQCILNAP (199 aa)). Asp-284 serves as a coordination point for Ca(2+). 3 disulfide bridges follow: Cys-308/Cys-390, Cys-352/Cys-374, and Cys-354/Cys-357. Residue His-333 participates in Zn(2+) binding. The active site involves Glu-334. Residues His-337 and His-343 each contribute to the Zn(2+) site. 2 residues coordinate Ca(2+): Cys-390 and Asn-393. The propeptide occupies 396–411 (LRTDTVSTPVSGNEPL).

This sequence belongs to the venom metalloproteinase (M12B) family. P-II subfamily. As to quaternary structure, monomer. The cofactor is Zn(2+). As to expression, expressed by the venom gland.

The protein localises to the secreted. Its function is as follows. Snake venom metalloproteinase that impairs hemostasis in the envenomed animal. The chain is Zinc metalloproteinase/disintegrin from Protobothrops mucrosquamatus (Taiwan habu).